We begin with the raw amino-acid sequence, 177 residues long: tRNA (cytidine(56)-2'-O)-methyltransferase (177 aa).

S-adenosyl-L-methionine contacts are provided by residues Leu-84 and 109-113 (GAEKV).

It belongs to the aTrm56 family. As to quaternary structure, homodimer.

It localises to the cytoplasm. The catalysed reaction is cytidine(56) in tRNA + S-adenosyl-L-methionine = 2'-O-methylcytidine(56) in tRNA + S-adenosyl-L-homocysteine + H(+). Its function is as follows. Specifically catalyzes the AdoMet-dependent 2'-O-ribose methylation of cytidine at position 56 in tRNAs. The chain is tRNA (cytidine(56)-2'-O)-methyltransferase from Methanosarcina barkeri (strain Fusaro / DSM 804).